A 553-amino-acid polypeptide reads, in one-letter code: Solute carrier family 22 member 12 (553 aa).

Residues 9 to 29 (LVGGLGRFQVLQTMALMVSIM) traverse the membrane as a helical segment. 2 N-linked (GlcNAc...) asparagine glycosylation sites follow: Asn-56 and Asn-102. 11 helical membrane-spanning segments follow: residues 146–166 (PMAQ…CGPA), 174–194 (LVLT…AFAP), 195–215 (AFPV…GVMM), 232–252 (LVMT…AAVA), 260–280 (LLQL…WWLA), 351–371 (CIST…ALDL), 378–398 (IFLL…GALL), 407–427 (PTLA…TLVP), 435–455 (SALA…ITIY), 466–486 (MTAV…GPLV), and 495–515 (WLPL…ALLL). A Phosphothreonine modification is found at Thr-542.

Belongs to the major facilitator (TC 2.A.1) superfamily. Organic cation transporter (TC 2.A.1.19) family. In terms of assembly, interacts with PDZK1. N-glycosylated. As to expression, detected in kidney (at protein level). Detected in fetal and adult kidney. Detected in epithelial cells of proximal tubules in renal cortex.

The protein resides in the apical cell membrane. The enzyme catalyses urate(out) + (S)-lactate(in) = urate(in) + (S)-lactate(out). It carries out the reaction nicotinate(in) + urate(out) = nicotinate(out) + urate(in). It catalyses the reaction urate(out) + n chloride(in) = urate(in) + n chloride(out). The catalysed reaction is orotate(out) + nicotinate(in) = orotate(in) + nicotinate(out). In terms of biological role, electroneutral antiporter that translocates urate across the apical membrane of proximal tubular cells in exchange for monovalent organic or inorganic anions. Involved in renal reabsorption of urate and helps maintaining blood levels of uric acid. Mediates urate uptake by an exchange with organic anions such as (S)-lactate and nicotinate, and inorganic anion Cl(-). Other inorganic anions such as Br(-), I(-) and NO3(-) may also act as counteranions that exchange for urate. Also mediates orotate tubular uptake coupled with nicotinate efflux and to a lesser extent with lactate efflux, therefore displaying a potential role in orotate renal reabsorption. Orotate transport is Cl(-)-dependent. The protein is Solute carrier family 22 member 12 of Homo sapiens (Human).